The following is a 181-amino-acid chain: Adenylate kinase (181 aa).

10 to 15 (GAGKGT) serves as a coordination point for ATP. The segment at 30–59 (STGDLFRANISQQTPLGREAQKYMDAGDLV) is NMP. Residues Thr31, Arg36, 57–59 (DLV), 85–88 (GYPR), and Gln92 contribute to the AMP site. Positions 126-132 (ARGRNDD) are LID. Residue Arg127 participates in ATP binding. The AMP site is built by Arg129 and Arg140. Residue Gly166 participates in ATP binding.

It belongs to the adenylate kinase family. In terms of assembly, monomer.

Its subcellular location is the cytoplasm. It catalyses the reaction AMP + ATP = 2 ADP. It participates in purine metabolism; AMP biosynthesis via salvage pathway; AMP from ADP: step 1/1. Functionally, catalyzes the reversible transfer of the terminal phosphate group between ATP and AMP. Plays an important role in cellular energy homeostasis and in adenine nucleotide metabolism. The polypeptide is Adenylate kinase (Nocardia farcinica (strain IFM 10152)).